The following is a 363-amino-acid chain: Ferrochelatase (363 aa).

Positions 209 and 290 each coordinate Fe cation.

It belongs to the ferrochelatase family.

The protein resides in the cytoplasm. It catalyses the reaction heme b + 2 H(+) = protoporphyrin IX + Fe(2+). It functions in the pathway porphyrin-containing compound metabolism; protoheme biosynthesis; protoheme from protoporphyrin-IX: step 1/1. In terms of biological role, catalyzes the ferrous insertion into protoporphyrin IX. In Azoarcus sp. (strain BH72), this protein is Ferrochelatase.